A 64-amino-acid chain; its full sequence is Large ribosomal subunit protein uL29 (64 aa).

Belongs to the universal ribosomal protein uL29 family.

In Maridesulfovibrio salexigens (strain ATCC 14822 / DSM 2638 / NCIMB 8403 / VKM B-1763) (Desulfovibrio salexigens), this protein is Large ribosomal subunit protein uL29.